A 206-amino-acid chain; its full sequence is Platelet glycoprotein Ib beta chain (206 aa).

Residues 1 to 26 (MGSRPRGALSLLLLLLALLSRPASGC) form the signal peptide. 2 disulfide bridges follow: C26–C32 and C30–C39. Residues 27-55 (PAPCSCAGTLVDCGRRGLTWASLPAAFPP) form the LRRNT domain. Topologically, residues 27 to 147 (PAPCSCAGTL…RAACAPGLLC (121 aa)) are extracellular. An LRR repeat occupies 60-83 (LVLTGNNLTALPPGLLDALPALRA). Residue N66 is glycosylated (N-linked (GlcNAc...) asparagine). An LRRCT domain is found at 89–143 (NPWRCDCRLLPLRAWLAGRPERAPYRDLRCVAPPALRGRLLPYVAEDELRAACAP). 2 cysteine pairs are disulfide-bonded: C93–C118 and C95–C141. The helical transmembrane segment at 148 to 172 (WGALVAQLALLVLGLLHALLLALLL) threads the bilayer. The Cytoplasmic segment spans residues 173–206 (GRLRRLRARARARSIQEFSLTAPLVAESARGGAS). A phosphoserine mark is found at S186 and S191. At T193 the chain carries Phosphothreonine. A Phosphoserine modification is found at S200.

In terms of assembly, two GP-Ib beta are disulfide-linked to one GP-Ib alpha. GP-IX is complexed with the GP-Ib heterodimer via a non covalent linkage. Interacts with TRAF4.

The protein localises to the membrane. In terms of biological role, gp-Ib, a surface membrane protein of platelets, participates in the formation of platelet plugs by binding to von Willebrand factor, which is already bound to the subendothelium. In Mus musculus (Mouse), this protein is Platelet glycoprotein Ib beta chain (Gp1bb).